The sequence spans 68 residues: Large ribosomal subunit protein bL31 (68 aa).

Cys-16, Cys-18, Cys-36, and Cys-39 together coordinate Zn(2+).

It belongs to the bacterial ribosomal protein bL31 family. Type A subfamily. In terms of assembly, part of the 50S ribosomal subunit. Requires Zn(2+) as cofactor.

Binds the 23S rRNA. The sequence is that of Large ribosomal subunit protein bL31 from Sorangium cellulosum (strain So ce56) (Polyangium cellulosum (strain So ce56)).